A 175-amino-acid polypeptide reads, in one-letter code: O-acetyl-ADP-ribose deacetylase (175 aa).

Residues 1–175 enclose the Macro domain; sequence MAVQPEVILG…IYRRLLASYP (175 aa). Substrate-binding positions include 11-12, N25, 33-35, and 122-126; these read DI, GVD, and STGVY. D35 acts as the Proton acceptor in catalysis.

This sequence belongs to the MacroD-type family. YmdB subfamily. In terms of assembly, homodimer. Interacts with RNase III.

It carries out the reaction 3''-O-acetyl-ADP-D-ribose + H2O = ADP-D-ribose + acetate + H(+). It catalyses the reaction 2''-O-acetyl-ADP-D-ribose + H2O = ADP-D-ribose + acetate + H(+). Deacetylates O-acetyl-ADP ribose to yield ADP-ribose and free acetate. Down-regulates ribonuclease 3 (RNase III) activity. Acts by interacting directly with the region of the ribonuclease that is required for dimerization/activation. The protein is O-acetyl-ADP-ribose deacetylase of Klebsiella pneumoniae (strain 342).